A 196-amino-acid polypeptide reads, in one-letter code: Probable GTP-binding protein EngB (196 aa).

Residues 22-195 form the EngB-type G domain; the sequence is NIPEIALVGR…WQWIEERMGK (174 aa). Residues 30–37, 57–61, 75–78, 142–145, and 174–176 contribute to the GTP site; these read GRSNVGKS, GKTQT, DVPG, TKID, and FSA. Mg(2+) contacts are provided by S37 and T59.

It belongs to the TRAFAC class TrmE-Era-EngA-EngB-Septin-like GTPase superfamily. EngB GTPase family. The cofactor is Mg(2+).

Its function is as follows. Necessary for normal cell division and for the maintenance of normal septation. This Limosilactobacillus reuteri (strain DSM 20016) (Lactobacillus reuteri) protein is Probable GTP-binding protein EngB.